The sequence spans 156 residues: Ribosome maturation factor RimP (156 aa).

This sequence belongs to the RimP family.

The protein localises to the cytoplasm. Required for maturation of 30S ribosomal subunits. This chain is Ribosome maturation factor RimP, found in Prochlorococcus marinus (strain NATL1A).